An 895-amino-acid polypeptide reads, in one-letter code: Serine/threonine-protein kinase-like protein ACR4 (895 aa).

The N-terminal stretch at 1–29 (MRMFETRAREWILLVKLVLFTSIWQLASA) is a signal peptide. Residues 30–434 (LGSMSSIAIS…FWSLQLPIAT (405 aa)) lie on the Extracellular side of the membrane. Repeat copies occupy residues 38–73 (ISYGEGGSVFCGLKSDGSHLVVCYGSNSAILYGTPG), 77–112 (FIGLTGGDGFMCGLLMLSHQPYCWGNSAFIQMGVPQ), 130–167 (LCGLRKPIVGRRKNSNIISSSLVDCWGYNMTRNFVFDK), 169–202 (LHSLSAGSEFNCALSSKDKSVFCWGDENSSQVIS), 210–245 (FQKIAAGGYHVCGILDGLESRVLCWGKSLEFEEEVT), 262–296 (LLAVVGGKFYACGIKRYDHSAVCWGFFVNRSTPAP), and 301–339 (FYDLAAGNYFTCGVLTGTSMSPVCWGLGFPASIPLAVSP). Residues 38–339 (ISYGEGGSVF…PASIPLAVSP (302 aa)) are 7 X 36 AA repeats. Residues Asn-158 and Asn-196 are each glycosylated (N-linked (GlcNAc...) asparagine). N-linked (GlcNAc...) asparagine glycosylation is present at Asn-290. One copy of the TNFR-Cys repeat lies at 346-395 (PCPPGTHELSNQENSPCKFTGSHICLPCSTSCPPGMYQKSVCTERSDQVC). 3 disulfide bridges follow: Cys-347-Cys-370, Cys-373-Cys-387, and Cys-377-Cys-395. 2 N-linked (GlcNAc...) asparagine glycosylation sites follow: Asn-398 and Asn-410. A helical membrane pass occupies residues 435-455 (AEIGFALFLVAVVSITAALYI). Over 456-895 (RYRLRNCRCS…GQSLFLHHNF (440 aa)) the chain is Cytoplasmic. Residue Ser-475 is modified to Phosphoserine. Positions 512–789 (FKEESIVGKG…KVTTALERAL (278 aa)) constitute a Protein kinase domain. Residues 518-526 (VGKGSFSCV) and Lys-540 each bind ATP. Catalysis depends on Asp-641, which acts as the Proton acceptor. The disordered stretch occupies residues 818–895 (SWRIGSKRSG…GQSLFLHHNF (78 aa)). Positions 865–877 (EGRKQQEALRSLE) are enriched in basic and acidic residues.

Belongs to the protein kinase superfamily. Ser/Thr protein kinase family. As to quaternary structure, homodimer. Interacts with PP2A3. Post-translationally, autophosphorylated and phosphorylated by ALE2. Expressed in seedlings, floral buds, siliques, leaves, shoot apical meristems (SAM), and, to a lower extent, in roots.

The protein localises to the cell membrane. The protein resides in the endosome. Its subcellular location is the multivesicular body membrane. The enzyme catalyses L-seryl-[protein] + ATP = O-phospho-L-seryl-[protein] + ADP + H(+). It carries out the reaction L-threonyl-[protein] + ATP = O-phospho-L-threonyl-[protein] + ADP + H(+). Its function is as follows. Controls formative cell division in meristems, including root tips and lateral root initiation zones of the pericycle, in response to CLE40 signal. Acts with CLE40p peptide as a ligand-receptor pair in a signal transduction pathway, coordinating movement of the root tip and organization of cell divisions in the root meristem. Required during embryogenesis and development, probably for the differentiation of protoderm and epidermal cells. Involved in the regulation of cellular organization during the development of sepal margins and ovule integument outgrowth and promotes giant cell formation. Can phosphorylate ALE2. In Arabidopsis thaliana (Mouse-ear cress), this protein is Serine/threonine-protein kinase-like protein ACR4.